A 465-amino-acid polypeptide reads, in one-letter code: ATP synthase subunit beta (465 aa).

ATP is bound at residue Gly-148–Thr-155.

It belongs to the ATPase alpha/beta chains family. As to quaternary structure, F-type ATPases have 2 components, CF(1) - the catalytic core - and CF(0) - the membrane proton channel. CF(1) has five subunits: alpha(3), beta(3), gamma(1), delta(1), epsilon(1). CF(0) has three main subunits: a(1), b(2) and c(9-12). The alpha and beta chains form an alternating ring which encloses part of the gamma chain. CF(1) is attached to CF(0) by a central stalk formed by the gamma and epsilon chains, while a peripheral stalk is formed by the delta and b chains.

It localises to the cell inner membrane. The catalysed reaction is ATP + H2O + 4 H(+)(in) = ADP + phosphate + 5 H(+)(out). Produces ATP from ADP in the presence of a proton gradient across the membrane. The catalytic sites are hosted primarily by the beta subunits. This chain is ATP synthase subunit beta, found in Neisseria meningitidis serogroup B (strain ATCC BAA-335 / MC58).